A 495-amino-acid polypeptide reads, in one-letter code: Trigger factor (495 aa).

One can recognise a PPIase FKBP-type domain in the interval 169-254 (GDRVTIDYLG…VKEVAAPGEV (86 aa)). The interval 439–495 (ALLADDESEDKPAAKKAAPKKKAAKAEATEAAAEGEEAAVPKKKAAPKKKAAEDSAE) is disordered.

This sequence belongs to the FKBP-type PPIase family. Tig subfamily.

Its subcellular location is the cytoplasm. The enzyme catalyses [protein]-peptidylproline (omega=180) = [protein]-peptidylproline (omega=0). Its function is as follows. Involved in protein export. Acts as a chaperone by maintaining the newly synthesized protein in an open conformation. Functions as a peptidyl-prolyl cis-trans isomerase. In Rhizobium rhizogenes (strain K84 / ATCC BAA-868) (Agrobacterium radiobacter), this protein is Trigger factor.